We begin with the raw amino-acid sequence, 91 residues long: Late embryogenis abundant protein 2 (91 aa).

Residues 47 to 72 form a disordered region; the sequence is KRAGEASSEKAPWVPDPKTGYYRPET.

The protein belongs to the LEA type 3 family.

It is found in the cytoplasm. The protein resides in the nucleus. The polypeptide is Late embryogenis abundant protein 2 (Arabidopsis thaliana (Mouse-ear cress)).